The following is a 361-amino-acid chain: MSQNSLRLVEDKSVDKSKALEAALSQIERSFGKGSIMKLGSNENVVEIETVSTGSLSLDIALGIGGLPKGRIVEIYGPESSGKTTLALQTIAEAQKKGGICAFVDAEHALDPVYARKLGVDLQNLLISQPDTGEQALEITDTLVRSGAIDVLVVDSVAALTPRAEIEGEMGDSLPGLQARLMSQALRKLTASISKSNTMVIFINQIRMKIGVMFGSPETTTGGNALKFYASVRLDIRRIGAVKEREEVVGNQTRVKVVKNKMAPPFKQVEFDIMYGEGVSKTGELVDLGVKAGIVEKSGAWFSYNSQRLGQGRENAKLFLRDNPDLAREIELSLRQNAGLIADRFLQNGGPDADDGEAAAE.

Residue 77–84 (GPESSGKT) coordinates ATP.

Belongs to the RecA family.

It localises to the cytoplasm. Functionally, can catalyze the hydrolysis of ATP in the presence of single-stranded DNA, the ATP-dependent uptake of single-stranded DNA by duplex DNA, and the ATP-dependent hybridization of homologous single-stranded DNAs. It interacts with LexA causing its activation and leading to its autocatalytic cleavage. The protein is Protein RecA of Rhizobium rhizogenes (strain K84 / ATCC BAA-868) (Agrobacterium radiobacter).